The chain runs to 243 residues: Probable 6-oxopurine nucleoside phosphorylase (243 aa).

Phosphate contacts are provided by residues T8 and 48–49 (RH). Substrate is bound at residue M174. T175 serves as a coordination point for phosphate. 198-200 (NYA) is a binding site for substrate.

This sequence belongs to the PNP/MTAP phosphorylase family. MTAP subfamily. In terms of assembly, homohexamer. Dimer of a homotrimer.

It carries out the reaction a purine D-ribonucleoside + phosphate = a purine nucleobase + alpha-D-ribose 1-phosphate. It participates in purine metabolism; purine nucleoside salvage. In terms of biological role, purine nucleoside phosphorylase which is highly specific for 6-oxopurine nucleosides. Cleaves guanosine or inosine to respective bases and sugar-1-phosphate molecules. Involved in purine salvage. The protein is Probable 6-oxopurine nucleoside phosphorylase of Archaeoglobus fulgidus (strain ATCC 49558 / DSM 4304 / JCM 9628 / NBRC 100126 / VC-16).